The sequence spans 204 residues: Apoptosis regulator R11 (204 aa).

Positions 101-120 (ELFRDGTNWGRIVAFFSFGR) match the BH1 motif. The BH2 signature appears at 152-167 (PWMQENGGWEAFVGLY). Residues 181-198 (RFGRLLTIVMLTGVFALV) traverse the membrane as a helical segment.

It belongs to the Bcl-2 family.

It localises to the membrane. Functionally, confers strong protection against cell death. The sequence is that of Apoptosis regulator R11 from Xenopus laevis (African clawed frog).